Here is a 395-residue protein sequence, read N- to C-terminus: Elongation factor Tu (395 aa).

A tr-type G domain is found at 10–204; sequence KPHVNVGTIG…AVDEYIPEPV (195 aa). The segment at 19–26 is G1; that stretch reads GHVDHGKT. 19 to 26 is a GTP binding site; the sequence is GHVDHGKT. T26 serves as a coordination point for Mg(2+). The interval 60–64 is G2; it reads GITIA. The G3 stretch occupies residues 81–84; the sequence is DCPG. GTP is bound by residues 81-85 and 136-139; these read DCPGH and NKVD. The tract at residues 136–139 is G4; that stretch reads NKVD. A G5 region spans residues 174 to 176; the sequence is SAL.

It belongs to the TRAFAC class translation factor GTPase superfamily. Classic translation factor GTPase family. EF-Tu/EF-1A subfamily. In terms of assembly, monomer.

It is found in the cytoplasm. The catalysed reaction is GTP + H2O = GDP + phosphate + H(+). Its function is as follows. GTP hydrolase that promotes the GTP-dependent binding of aminoacyl-tRNA to the A-site of ribosomes during protein biosynthesis. This is Elongation factor Tu from Exiguobacterium sp. (strain ATCC BAA-1283 / AT1b).